Reading from the N-terminus, the 545-residue chain is Baeyer-Villiger monooxygenase (545 aa).

The FAD site is built by phenylalanine 24, aspartate 45, tryptophan 54, aspartate 65, tyrosine 71, and valine 118.

It belongs to the FAD-binding monooxygenase family. FAD serves as cofactor.

Its function is as follows. Catalyzes a Baeyer-Villiger oxidation reaction, i.e. the insertion of an oxygen atom into a carbon-carbon bond adjacent to a carbonyl, which converts ketones to esters or lactones using NADPH as an electron donor. Besides cycloalkanones, can use cyclic alpha,beta-unsaturated ketones as substrates, leading to conjugated ene-lactones. Can also act on methylated cycloalkanones and methylated cycloalkenones with high enantioselectivity in some cases. This chain is Baeyer-Villiger monooxygenase, found in Pseudooceanicola batsensis (strain ATCC BAA-863 / DSM 15984 / KCTC 12145 / HTCC2597) (Oceanicola batsensis).